A 174-amino-acid polypeptide reads, in one-letter code: Serine protease 2 (174 aa).

Cys15 and Cys36 are joined by a disulfide. Residues His35, Asp65, and Ser147 each act as charge relay system in the active site. A disulfide bridge links Cys141 with Cys168.

The protein belongs to the peptidase S1 family.

Its subcellular location is the secreted. In terms of biological role, broad substrate specificity. The protein is Serine protease 2 of Streptomyces fradiae (Streptomyces roseoflavus).